The following is a 99-amino-acid chain: Aspartyl/glutamyl-tRNA(Asn/Gln) amidotransferase subunit C (99 aa).

This sequence belongs to the GatC family. As to quaternary structure, heterotrimer of A, B and C subunits.

It catalyses the reaction L-glutamyl-tRNA(Gln) + L-glutamine + ATP + H2O = L-glutaminyl-tRNA(Gln) + L-glutamate + ADP + phosphate + H(+). It carries out the reaction L-aspartyl-tRNA(Asn) + L-glutamine + ATP + H2O = L-asparaginyl-tRNA(Asn) + L-glutamate + ADP + phosphate + 2 H(+). In terms of biological role, allows the formation of correctly charged Asn-tRNA(Asn) or Gln-tRNA(Gln) through the transamidation of misacylated Asp-tRNA(Asn) or Glu-tRNA(Gln) in organisms which lack either or both of asparaginyl-tRNA or glutaminyl-tRNA synthetases. The reaction takes place in the presence of glutamine and ATP through an activated phospho-Asp-tRNA(Asn) or phospho-Glu-tRNA(Gln). This is Aspartyl/glutamyl-tRNA(Asn/Gln) amidotransferase subunit C from Corynebacterium efficiens (strain DSM 44549 / YS-314 / AJ 12310 / JCM 11189 / NBRC 100395).